The sequence spans 1397 residues: Ankyrin repeat domain-containing protein 30A (1397 aa).

ANK repeat units follow at residues 72 to 101 (QKRTALHWACVNGHEEVVTFLVDRKCQLDV), 105 to 134 (EHRTPLMKALQCHQEACANILIDSGADINL), 138 to 167 (YGNTALHYAVYSEILSVVAKLLSHGAVIEV), 171 to 200 (ASLTPLLLSITKRSEQIVEFLLIKNANANA), 204 to 233 (YKCTALMLAVCHGSSEIVGMLLQQNVDVFA), and 237 to 271 (CGVTAEHYAVTCGFHHIHEQIMEYIRKLSKNHQNT). Residues 267–279 (NHQNTNPEGTSAG) show a composition bias toward polar residues. 4 disordered regions span residues 267–376 (NHQN…TWPA), 453–482 (PTKESSTKASANDQRFPSESKQEEDEEYSC), 782–807 (QTLRADEILPSESKQKDYEESSWDSE), and 902–931 (TLRADQMFPSESKQKKVEENSWDSESLRET). 2 stretches are compositionally biased toward basic and acidic residues: residues 290–304 (RTPDTAESLVEKTPD) and 312–326 (RTPDTAESLVEKTPD). The segment covering 455 to 467 (KESSTKASANDQR) has biased composition (polar residues). Composition is skewed to basic and acidic residues over residues 782–800 (QTLRADEILPSESKQKDYE) and 913–931 (SKQKKVEENSWDSESLRET). Coiled coils occupy residues 998-1188 (VLKK…KQDK) and 1282-1327 (EHAQ…FQLQ).

Mainly expressed in breast and testis. A very faint signal is detected in placenta. Also expressed in many breast cancer cells.

This Homo sapiens (Human) protein is Ankyrin repeat domain-containing protein 30A (ANKRD30A).